We begin with the raw amino-acid sequence, 198 residues long: ATP-dependent Clp protease proteolytic subunit 1 (198 aa).

The Nucleophile role is filled by Ser96. His121 is a catalytic residue.

It belongs to the peptidase S14 family. As to quaternary structure, fourteen ClpP subunits assemble into 2 heptameric rings which stack back to back to give a disk-like structure with a central cavity, resembling the structure of eukaryotic proteasomes.

The protein resides in the cytoplasm. The enzyme catalyses Hydrolysis of proteins to small peptides in the presence of ATP and magnesium. alpha-casein is the usual test substrate. In the absence of ATP, only oligopeptides shorter than five residues are hydrolyzed (such as succinyl-Leu-Tyr-|-NHMec, and Leu-Tyr-Leu-|-Tyr-Trp, in which cleavage of the -Tyr-|-Leu- and -Tyr-|-Trp bonds also occurs).. Functionally, cleaves peptides in various proteins in a process that requires ATP hydrolysis. Has a chymotrypsin-like activity. Plays a major role in the degradation of misfolded proteins. This is ATP-dependent Clp protease proteolytic subunit 1 from Synechocystis sp. (strain ATCC 27184 / PCC 6803 / Kazusa).